The following is an 846-amino-acid chain: Arsenate respiratory reductase molybdopterin-containing subunit ArrA (846 aa).

Residues Met1–Ala29 constitute a signal peptide (tat-type signal). In terms of domain architecture, 4Fe-4S Mo/W bis-MGD-type spans Gly43–Asp99. Residues Cys50, Cys53, Cys57, and Cys85 each contribute to the [4Fe-4S] cluster site. Arg155 is an arsenite binding site. Arsenate is bound at residue Tyr156. Position 179 (His179) interacts with arsenite. Arsenate is bound at residue Ser180. Cys183 contacts Mo-bis(molybdopterin guanine dinucleotide). Residue Lys188 coordinates arsenate. Tyr200 lines the arsenite pocket.

The protein belongs to the prokaryotic molybdopterin-containing oxidoreductase family. In terms of assembly, heterodimer composed of one large subunit (ArrA) and one small subunit (ArrB). It depends on [4Fe-4S] cluster as a cofactor. Requires Mo-bis(molybdopterin guanine dinucleotide) as cofactor. Post-translationally, predicted to be exported by the Tat system. The position of the signal peptide cleavage has been experimentally proven.

The protein resides in the periplasm. It carries out the reaction arsenite + A + H2O = arsenate + AH2 + H(+). Its function is as follows. Component of the arsenate respiratory reductase (Arr) complex, which catalyzes the reduction of arsenate (As(V)) to arsenite (As(III)). Can use acetate as the electron donor. ArrA is the arsenate-binding subunit. The sequence is that of Arsenate respiratory reductase molybdopterin-containing subunit ArrA from Chrysiogenes arsenatis.